The chain runs to 49 residues: Large ribosomal subunit protein bL33 (49 aa).

This sequence belongs to the bacterial ribosomal protein bL33 family.

In Alkaliphilus metalliredigens (strain QYMF), this protein is Large ribosomal subunit protein bL33.